Reading from the N-terminus, the 313-residue chain is MEEMSGESVVSSAVPAAATRTTSFKGTSPSSKYVKLNVGGALYYTTMQTLTKQDTMLKAMFSGRMEVLTDSEGWILIDRCGKHFGTILNYLRDGAVPLPESRREIEELLAEAKYYLVQGLVEECQAALQNKDTYEPFCKVPVITSSKEEQKLIATSNKPAVKLLYNRSNNKYSYTSNSDDNMLKNIELFDKLSLRFNGRVLFIKDVIGDEICCWSFYGQGRKIAEVCCTSIVYATEKKQTKVEFPEARIYEETLNILLYEAQDGRGPDNALLEATGGAAGRSHHLDEDEERERIERVRRIHIKRPDDRAHLHQ.

Met-1 carries the N-acetylmethionine modification. Phosphoserine is present on Ser-23. One can recognise a BTB domain in the interval 32-100; sequence KYVKLNVGGA…LRDGAVPLPE (69 aa). The PCNA-binding signature appears at 239–245; the sequence is QTKVEFP.

This sequence belongs to the BACURD family. In terms of assembly, homotetramer; forms a two-fold symmetric tetramer in solution. Interacts with CUL3; interaction is direct and forms a 5:5 heterodecamer. Component of the BCR(BACURD3) E3 ubiquitin ligase complex, at least composed of CUL3, KCTD10/BACURD3 and RBX1. Interacts with DNA polymerase delta subunit 2/POLD2. Interacts with PCNA.

It is found in the nucleus. It functions in the pathway protein modification; protein ubiquitination. Its function is as follows. Substrate-specific adapter of a BCR (BTB-CUL3-RBX1) E3 ubiquitin-protein ligase complex. The BCR(BACURD3) E3 ubiquitin ligase complex mediates the ubiquitination of target proteins, leading to their degradation by the proteasome. This chain is BTB/POZ domain-containing adapter for CUL3-mediated RhoA degradation protein 3 (KCTD10), found in Homo sapiens (Human).